A 77-amino-acid chain; its full sequence is Protein NS4 (77 aa).

It localises to the host cytoplasm. The protein localises to the host nucleus. The protein resides in the host nucleolus. Functionally, may function as a nucleic acid binding protein that modulates transcription of genes participating in the IFN response. The chain is Protein NS4 (Segment-9) from Antilocapra americana (Pronghorn).